Reading from the N-terminus, the 316-residue chain is Ribosomal RNA small subunit methyltransferase H (316 aa).

S-adenosyl-L-methionine contacts are provided by residues 36–38 (GGH), aspartate 56, phenylalanine 83, aspartate 104, and glutamine 111.

The protein belongs to the methyltransferase superfamily. RsmH family.

The protein localises to the cytoplasm. The catalysed reaction is cytidine(1402) in 16S rRNA + S-adenosyl-L-methionine = N(4)-methylcytidine(1402) in 16S rRNA + S-adenosyl-L-homocysteine + H(+). Specifically methylates the N4 position of cytidine in position 1402 (C1402) of 16S rRNA. In Protochlamydia amoebophila (strain UWE25), this protein is Ribosomal RNA small subunit methyltransferase H.